The primary structure comprises 151 residues: Group 10 secretory phospholipase A2 (151 aa).

An N-terminal signal peptide occupies residues 1 to 17; it reads MLLLLLLLLLGPGSCLS. A propeptide spanning residues 18–28 is cleaved from the precursor; sequence EATRRSHVYKR. Intrachain disulfides connect Cys-39/Cys-97, Cys-53/Cys-143, Cys-55/Cys-71, Cys-70/Cys-125, Cys-76/Cys-150, Cys-77/Cys-118, Cys-86/Cys-111, and Cys-104/Cys-116. The Ca(2+) site is built by Tyr-54, Gly-56, and Gly-58. His-74 is a catalytic residue. Asp-75 lines the Ca(2+) pocket. The active site involves Asp-119.

This sequence belongs to the phospholipase A2 family. In terms of assembly, interacts with PLA2R1; this interaction mediates PLA2G10 clearance and inactivation. Ca(2+) serves as cofactor.

It is found in the secreted. It localises to the lysosome. Its subcellular location is the cytoplasmic vesicle. The protein localises to the secretory vesicle. The protein resides in the acrosome. The enzyme catalyses a 1,2-diacyl-sn-glycero-3-phosphocholine + H2O = a 1-acyl-sn-glycero-3-phosphocholine + a fatty acid + H(+). It carries out the reaction 1-hexadecanoyl-2-(9Z-octadecenoyl)-sn-glycero-3-phosphocholine + H2O = 1-hexadecanoyl-sn-glycero-3-phosphocholine + (9Z)-octadecenoate + H(+). It catalyses the reaction 1-octadecanoyl-2-(5Z,8Z,11Z,14Z-eicosatetraenoyl)-sn-glycero-3-phosphocholine + H2O = 1-octadecanoyl-sn-glycero-3-phosphocholine + (5Z,8Z,11Z,14Z)-eicosatetraenoate + H(+). The catalysed reaction is 1,2-dihexadecanoyl-sn-glycero-3-phosphocholine + H2O = 1-hexadecanoyl-sn-glycero-3-phosphocholine + hexadecanoate + H(+). The enzyme catalyses 1-hexadecanoyl-2-(9Z-octadecenoyl)-sn-glycero-3-phosphoglycerol + H2O = 1-hexadecanoyl-sn-glycero-3-phosphoglycerol + (9Z)-octadecenoate + H(+). It carries out the reaction 1,2-dihexadecanoyl-sn-glycero-3-phospho-(1'-sn-glycerol) + H2O = 1-hexadecanoyl-sn-glycero-3-phospho-(1'-sn-glycerol) + hexadecanoate + H(+). It catalyses the reaction 1-hexadecanoyl-2-(9Z-octadecenoyl)-sn-glycero-3-phospho-L-serine + H2O = 1-hexadecanoyl-sn-glycero-3-phospho-L-serine + (9Z)-octadecenoate + H(+). The catalysed reaction is 1-hexadecanoyl-2-(9Z,12Z-octadecadienoyl)-sn-glycero-3-phosphoethanolamine + H2O = 1-hexadecanoyl-sn-glycero-3-phosphoethanolamine + (9Z,12Z)-octadecadienoate + H(+). The enzyme catalyses 1-hexadecanoyl-2-(9Z-octadecenoyl)-sn-glycero-3-phosphate + H2O = 1-hexadecanoyl-sn-glycero-3-phosphate + (9Z)-octadecenoate + H(+). It carries out the reaction 1-O-hexadecyl-2-acetyl-sn-glycero-3-phosphocholine + H2O = 1-O-hexadecyl-sn-glycero-3-phosphocholine + acetate + H(+). Functionally, secretory calcium-dependent phospholipase A2 that primarily targets extracellular phospholipids. Hydrolyzes the ester bond of the fatty acyl group attached at sn-2 position of phospholipids with preference for phosphatidylcholines and phosphatidylglycerols over phosphatidylethanolamines. Preferentially releases sn-2 omega-6 and omega-3 polyunsaturated fatty acyl (PUFA) chains over saturated fatty acyls. Contributes to phospholipid remodeling of very low-density lipoprotein (VLDL), low-density lipoprotein (LDL) and high-density lipoprotein (HDL) particles. Hydrolyzes LDL phospholipids releasing unsaturated fatty acids that regulate macrophage differentiation toward foam cells. Efficiently hydrolyzes and inactivates platelet activating factor (PAF), a potent lipid mediator present in oxidized LDL. May act in an autocrine and paracrine manner. Secreted by lung epithelium, targets membrane phospholipids of infiltrating eosinophils, releasing arachidonate and boosting eicosanoid and cysteinyl leukotriene synthesis involved in airway inflammatory response. Secreted by gut epithelium, hydrolyzes dietary and biliary phosphatidylcholines in the gastrointestinal lumen. Plays a stem cell regulator role in colon epithelium. Within intracellular compartment, mediates Paneth-like cell differentiation and its stem cell supporting functions by inhibiting the Wnt signaling pathway in intestinal stem cell (ISC). Secreted in the intestinal lumen upon inflammation, acts in an autocrine way and promotes prostaglandin E2 synthesis that stimulates Wnt signaling pathway in ISCs and tissue regeneration. May participate in hair follicle morphogenesis by regulating phosphatidylethanolamines metabolism at the outermost epithelial layer and facilitating melanin synthesis. By releasing lysophosphatidylcholines (LPCs) at sperm acrosome, controls sperm cell capacitation, acrosome reaction and overall fertility. May promote neurite outgrowth in neuron fibers involved in nociception. Contributes to lipid remodeling of cellular membranes and generation of lipid mediators involved in pathogen clearance. Cleaves sn-2 fatty acyl chains of phosphatidylglycerols and phosphatidylethanolamines, which are major components of membrane phospholipids in bacteria. Displays bactericidal activity against Gram-positive bacteria by directly hydrolyzing phospholipids of the bacterial membrane. In pulmonary epithelium, may contribute to host defense response against adenoviral infection. Prevents adenovirus entry into host cells by hydrolyzing host cell plasma membrane, releasing C16:0 LPCs that inhibit virus-mediated membrane fusion and viral infection. Likely prevents adenoviral entry into the endosomes of host cells. May play a role in maturation and activation of innate immune cells including macrophages, group 2 innate lymphoid cells and mast cells. The sequence is that of Group 10 secretory phospholipase A2 (Pla2g10) from Rattus norvegicus (Rat).